Consider the following 152-residue polypeptide: Large ribosomal subunit protein uL13 (152 aa).

The disordered stretch occupies residues His-130–Ser-152.

Belongs to the universal ribosomal protein uL13 family. In terms of assembly, part of the 50S ribosomal subunit.

Its function is as follows. This protein is one of the early assembly proteins of the 50S ribosomal subunit, although it is not seen to bind rRNA by itself. It is important during the early stages of 50S assembly. This chain is Large ribosomal subunit protein uL13, found in Dinoroseobacter shibae (strain DSM 16493 / NCIMB 14021 / DFL 12).